We begin with the raw amino-acid sequence, 731 residues long: Autophagy-related protein 20 (731 aa).

The span at Met1–Lys22 shows a compositional bias: polar residues. A disordered region spans residues Met1–Val130. Positions Lys31–Ile41 are enriched in basic and acidic residues. Over residues Ser69–Thr82 the composition is skewed to polar residues. Composition is skewed to low complexity over residues Asn92–Gly102 and Leu113–Ser128. The PX domain occupies Ile164–Gly340. A 1,2-diacyl-sn-glycero-3-phospho-(1D-myo-inositol-3-phosphate) contacts are provided by Arg205, Ser207, and Lys231. Residues Ser253–Ser277 are disordered. Positions Gly259–Ser277 are enriched in gly residues. Residue Arg306 participates in a 1,2-diacyl-sn-glycero-3-phospho-(1D-myo-inositol-3-phosphate) binding. The tract at residues Asn586 to Ser626 is disordered. A compositionally biased stretch (pro residues) spans Pro608–Ser617.

Belongs to the sorting nexin family.

The protein localises to the endosome membrane. It is found in the preautophagosomal structure membrane. Required for cytoplasm to vacuole transport (Cvt), pexophagy and mitophagy. Also involved in endoplasmic reticulum-specific autophagic process and is essential for the survival of cells subjected to severe ER stress. Functions in protein retrieval from the endocytic pathway. This Candida albicans (strain SC5314 / ATCC MYA-2876) (Yeast) protein is Autophagy-related protein 20 (ATG20).